The chain runs to 164 residues: Glutaredoxin-2, mitochondrial (164 aa).

A mitochondrion-targeting transit peptide spans 1–19 (MIWRRAALAGTRLVWSRSG). A Phosphoserine modification is found at S20. Positions 57–157 (VNQIQETISD…PLVHQCYLKK (101 aa)) constitute a Glutaredoxin domain. Residue C68 participates in [2Fe-2S] cluster binding. K74 provides a ligand contact to glutathione. At C77 the chain carries S-glutathionyl cysteine; alternate. Cysteines 77 and 80 form a disulfide. 2 residues coordinate glutathione: Q109 and V121. Residue C153 participates in [2Fe-2S] cluster binding.

This sequence belongs to the glutaredoxin family. Monomer; active form. Homodimer; inactive form. The homodimer is probably linked by 1 2Fe-2S cluster. Widely expressed. Expressed in brain, heart, skeletal muscle, colon, thymus, spleen, kidney, liver, small intestine, placenta and lung. Not expressed in peripheral blood leukocytes.

It is found in the mitochondrion. It localises to the nucleus. Its activity is regulated as follows. The 2Fe-2S present in the homodimer leads to inactivation of the enzyme. The 2Fe-2S may serve as a redox sensor: the presence of one-electron oxidants or reductants leading to the loss of the 2Fe-2S cluster, subsequent monomerization and activation of the enzyme. Unlike other glutaredoxins, it is not inhibited by oxidation of structural Cys residues. In terms of biological role, glutathione-dependent oxidoreductase that facilitates the maintenance of mitochondrial redox homeostasis upon induction of apoptosis by oxidative stress. Involved in response to hydrogen peroxide and regulation of apoptosis caused by oxidative stress. Acts as a very efficient catalyst of monothiol reactions because of its high affinity for protein glutathione-mixed disulfides. Can receive electrons not only from glutathione (GSH), but also from thioredoxin reductase supporting both monothiol and dithiol reactions. Efficiently catalyzes both glutathionylation and deglutathionylation of mitochondrial complex I, which in turn regulates the superoxide production by the complex. Overexpression decreases the susceptibility to apoptosis and prevents loss of cardiolipin and cytochrome c release. The chain is Glutaredoxin-2, mitochondrial (GLRX2) from Homo sapiens (Human).